A 478-amino-acid chain; its full sequence is V-type proton ATPase subunit H (478 aa).

The protein belongs to the V-ATPase H subunit family. V-ATPase is a heteromultimeric enzyme composed of a peripheral catalytic V1 complex (components A to H) attached to an integral membrane V0 proton pore complex (components: a, c, c', c'', d, e, f and VOA1). Interacts with YND1.

It localises to the vacuole membrane. Functionally, subunit of the V1 complex of vacuolar(H+)-ATPase (V-ATPase), a multisubunit enzyme composed of a peripheral complex (V1) that hydrolyzes ATP and a membrane integral complex (V0) that translocates protons. V-ATPase is responsible for acidifying and maintaining the pH of intracellular compartments. This subunit is essential for activity, but not assembly, of the enzyme complex. This subunit is also required for silencing the ATPase activity of V-ATPase when V1 is detached from V0. This chain is V-type proton ATPase subunit H, found in Saccharomyces cerevisiae (strain ATCC 204508 / S288c) (Baker's yeast).